The chain runs to 295 residues: Ribosomal protein L11 methyltransferase (295 aa).

Residues T150, G171, D193, and N232 each contribute to the S-adenosyl-L-methionine site.

The protein belongs to the methyltransferase superfamily. PrmA family.

The protein localises to the cytoplasm. It catalyses the reaction L-lysyl-[protein] + 3 S-adenosyl-L-methionine = N(6),N(6),N(6)-trimethyl-L-lysyl-[protein] + 3 S-adenosyl-L-homocysteine + 3 H(+). Its function is as follows. Methylates ribosomal protein L11. This chain is Ribosomal protein L11 methyltransferase, found in Neisseria gonorrhoeae (strain ATCC 700825 / FA 1090).